The primary structure comprises 536 residues: Phosphoenolpyruvate carboxykinase (ATP) (536 aa).

Arg61, Tyr195, and Lys201 together coordinate substrate. ATP-binding positions include Lys201, His220, and Gly236–Thr244. Mn(2+) contacts are provided by Lys201 and His220. Asp257 is a Mn(2+) binding site. Positions 285, 322, and 447 each coordinate ATP. Arg322 contributes to the substrate binding site.

It belongs to the phosphoenolpyruvate carboxykinase (ATP) family. Requires Mn(2+) as cofactor.

It localises to the cytoplasm. It catalyses the reaction oxaloacetate + ATP = phosphoenolpyruvate + ADP + CO2. It functions in the pathway carbohydrate biosynthesis; gluconeogenesis. In terms of biological role, involved in the gluconeogenesis. Catalyzes the conversion of oxaloacetate (OAA) to phosphoenolpyruvate (PEP) through direct phosphoryl transfer between the nucleoside triphosphate and OAA. The chain is Phosphoenolpyruvate carboxykinase (ATP) from Mesorhizobium japonicum (strain LMG 29417 / CECT 9101 / MAFF 303099) (Mesorhizobium loti (strain MAFF 303099)).